Reading from the N-terminus, the 274-residue chain is Oxidoreductase stcQ (274 aa).

This sequence belongs to the avfA family.

Its pathway is mycotoxin biosynthesis; sterigmatocystin biosynthesis. In terms of biological role, oxidoreductase; part of the gene cluster that mediates the biosynthesis of sterigmatocystin (ST), a polyketide-derived furanocoumarin which is part of the most toxic and carcinogenic compounds among the known mycotoxins. The first step in the biosynthesis of sterigmatocystin is the production of hexanoate by the fatty acid synthase (FAS) units stcJ and stcK. The polyketide backbone is assembled by the non-reducing polyketide synthase stcA by condensation of the starter hexanoyl-CoA and 7 malonyl-CoA extender units followed by cyclization and release of norsolorinic acid. Norsolorinic acid is the first stable intermediate in the biosynthesis of sterigmatocystin and is converted into averantin (AVN) by the ketoreductase stcE which reduces the hexanoate ketone to an alcohol. Averantin is then oxidized into 5'-hydroxyaverantin (HAVN) by the cytochrome P450 monooxygenase stcF. 5'-hydroxyaverantin is further converted to 5'-oxyaverantin (OAVN) by the 5'-hydroxyaverantin dehydrogenase stcG. The next step is the conversion of OAVN into averufin (AVF) which is catalyzed by a yet to be identified enzyme. The cytochrome P450 monooxygenase stcB and the flavin-binding monooxygenase stcW are both required for the conversion of averufin to 1-hydroxyversicolorone. The esterase stcI probably catalyzes the formation of versiconal hemiacetal acetate from 1-hydroxyversicolorone. The oxydoreductase stcN then probably catalyzes the biosynthetic step from versiconal to versicolorin B (VERB). The next step is performed by the versicolorin B desaturase stcL to produce versicolorin A (VERA). The ketoreductase stcU and the cytochrome P450 monooxygenase stcS are involved in the conversion of versicolorin A to demethylsterigmatocystin. The Baeyer-Villiger oxidas stcQ and the reductase stcR might be involved in the biosynthetic step from versicolorin A to demethylsterigmatocystin. The final step in the biosynthesis of sterigmatocystin is the methylation of demethylsterigmatocystin catalyzed by the methyltransferase stcP. This is Oxidoreductase stcQ from Emericella nidulans (strain FGSC A4 / ATCC 38163 / CBS 112.46 / NRRL 194 / M139) (Aspergillus nidulans).